Reading from the N-terminus, the 276-residue chain is MHFHFSKMHGLGNDFMVVDCITQNIFFSPDLIRRLADRHTGVGFDQLLVVEAPYDPETDFHYRIFNADGSEVEQCGNGARCFARFVRMKGLTNKYSINVSTKKGKMVLKIEDNDLITVNMGIPEFEPGKIPFKAKQPEKTYILRTDVHTLFCGAVSMGNPHVVTVVDDVDTADVDTLGPLLESHERFPERVNAGFMQVVNREEVRLRVYERGAGETQACGSGACGAVAVGITQGLLAENVKVRLPGGDLHISWQGPGKPLLMTGPATHVFDGQLSC.

3 residues coordinate substrate: Asn13, Gln46, and Asn66. Residue Cys75 is the Proton donor of the active site. Residues 76 to 77 (GN), Asn159, Asn192, and 210 to 211 (ER) contribute to the substrate site. Cys219 acts as the Proton acceptor in catalysis. 220-221 (GS) serves as a coordination point for substrate.

It belongs to the diaminopimelate epimerase family. Homodimer.

The protein localises to the cytoplasm. The catalysed reaction is (2S,6S)-2,6-diaminopimelate = meso-2,6-diaminopimelate. The protein operates within amino-acid biosynthesis; L-lysine biosynthesis via DAP pathway; DL-2,6-diaminopimelate from LL-2,6-diaminopimelate: step 1/1. In terms of biological role, catalyzes the stereoinversion of LL-2,6-diaminopimelate (L,L-DAP) to meso-diaminopimelate (meso-DAP), a precursor of L-lysine and an essential component of the bacterial peptidoglycan. This chain is Diaminopimelate epimerase, found in Vibrio atlanticus (strain LGP32) (Vibrio splendidus (strain Mel32)).